A 395-amino-acid chain; its full sequence is Acetate kinase (395 aa).

Mg(2+) is bound at residue N8. Residue K15 participates in ATP binding. A substrate-binding site is contributed by R89. The Proton donor/acceptor role is filled by D146. ATP-binding positions include H206–G210, D281–R283, and G329–N333. E382 is a binding site for Mg(2+).

This sequence belongs to the acetokinase family. Homodimer. It depends on Mg(2+) as a cofactor. Requires Mn(2+) as cofactor.

It localises to the cytoplasm. It catalyses the reaction acetate + ATP = acetyl phosphate + ADP. It functions in the pathway metabolic intermediate biosynthesis; acetyl-CoA biosynthesis; acetyl-CoA from acetate: step 1/2. Catalyzes the formation of acetyl phosphate from acetate and ATP. Can also catalyze the reverse reaction. This is Acetate kinase from Shouchella clausii (strain KSM-K16) (Alkalihalobacillus clausii).